The primary structure comprises 153 residues: Ribosome maturation factor RimP (153 aa).

Belongs to the RimP family.

The protein resides in the cytoplasm. In terms of biological role, required for maturation of 30S ribosomal subunits. This Synechococcus elongatus (strain ATCC 33912 / PCC 7942 / FACHB-805) (Anacystis nidulans R2) protein is Ribosome maturation factor RimP.